Here is a 77-residue protein sequence, read N- to C-terminus: Delta/omega-plectoxin-Pt1a (77 aa).

The first 20 residues, 1 to 20, serve as a signal peptide directing secretion; sequence MKHLIVAVVLLSALAICTSA. Residues 21 to 34 constitute a propeptide that is removed on maturation; it reads EEEQVNVPFRPEER. Intrachain disulfides connect Cys38-Cys51, Cys45-Cys57, Cys50-Cys67, Cys54-Cys74, and Cys59-Cys65. The O-palmitoyl serine moiety is linked to residue Ser73. Cys74 is subject to Cysteine amide.

The protein belongs to the neurotoxin 02 (plectoxin) family. 01 (Tx3) subfamily. In terms of tissue distribution, expressed by the venom gland.

The protein resides in the secreted. Its function is as follows. Excitatory toxin that acts on both calcium and sodium (Nav) channels. It preferentially blocks a subset of calcium channels that is apparently not required for neurotransmitter release, it decreases threshold for sodium channel activation and it slows sodium channel inactivation. As it enhances synaptic transmission by prolonging presynaptic release of neurotransmitter, its effects on sodium and calcium channels may act synergistically to sustain the terminal excitability. The chain is Delta/omega-plectoxin-Pt1a from Plectreurys tristis (Spider).